The primary structure comprises 165 residues: P2Y purinoceptor 4 (165 aa).

Residues 1–16 (SDTLYVLSLPTLVYYY) traverse the membrane as a helical segment. At 17 to 30 (AARNHWPFGTGFCK) the chain is on the extracellular side. Residues 31–51 (FVRFLFYWNLYCSVLFLTCIS) form a helical membrane-spanning segment. Residues 52 to 74 (VHRYMGICHPLRALRWGRPRFAS) are Cytoplasmic-facing. The helical transmembrane segment at 75-95 (LLCLAVWLVVAGCLVPNLFFV) threads the bilayer. Residues 96–124 (TTSPNGTTILCHDTTRPEEFDHYVHFSSA) are Extracellular-facing. Residue Asn100 is glycosylated (N-linked (GlcNAc...) asparagine). The helical transmembrane segment at 125–145 (VMVLLFGLPFLVTLVCYGLMA) threads the bilayer. The Cytoplasmic segment spans residues 146-165 (RRLYRPLPGAGQSSSRLRSL).

This sequence belongs to the G-protein coupled receptor 1 family.

It localises to the cell membrane. Functionally, receptor for UTP and UDP coupled to G-proteins that activate a phosphatidylinositol-calcium second messenger system. This chain is P2Y purinoceptor 4 (P2RY4), found in Cricetulus griseus (Chinese hamster).